A 77-amino-acid polypeptide reads, in one-letter code: Exodeoxyribonuclease 7 small subunit (77 aa).

Belongs to the XseB family. As to quaternary structure, heterooligomer composed of large and small subunits.

It is found in the cytoplasm. The enzyme catalyses Exonucleolytic cleavage in either 5'- to 3'- or 3'- to 5'-direction to yield nucleoside 5'-phosphates.. Bidirectionally degrades single-stranded DNA into large acid-insoluble oligonucleotides, which are then degraded further into small acid-soluble oligonucleotides. This Carboxydothermus hydrogenoformans (strain ATCC BAA-161 / DSM 6008 / Z-2901) protein is Exodeoxyribonuclease 7 small subunit.